We begin with the raw amino-acid sequence, 698 residues long: Elongation factor G (698 aa).

Residues 11–291 (THFRNIGIAA…AVVDYLPSPL (281 aa)) form the tr-type G domain. Residues 20 to 27 (AHIDAGKT), 90 to 94 (DTPGH), and 144 to 147 (NKMD) each bind GTP.

It belongs to the TRAFAC class translation factor GTPase superfamily. Classic translation factor GTPase family. EF-G/EF-2 subfamily.

It localises to the cytoplasm. Catalyzes the GTP-dependent ribosomal translocation step during translation elongation. During this step, the ribosome changes from the pre-translocational (PRE) to the post-translocational (POST) state as the newly formed A-site-bound peptidyl-tRNA and P-site-bound deacylated tRNA move to the P and E sites, respectively. Catalyzes the coordinated movement of the two tRNA molecules, the mRNA and conformational changes in the ribosome. The polypeptide is Elongation factor G (Deinococcus radiodurans (strain ATCC 13939 / DSM 20539 / JCM 16871 / CCUG 27074 / LMG 4051 / NBRC 15346 / NCIMB 9279 / VKM B-1422 / R1)).